Here is a 180-residue protein sequence, read N- to C-terminus: Probable DNA replication complex GINS protein PSF2 (180 aa).

Belongs to the GINS2/PSF2 family. Component of the GINS complex which is a heterotetramer of gins1, gins2, gins3 and gins4.

The protein localises to the nucleus. Its function is as follows. Required for correct functioning of the GINS complex, a complex that plays an essential role in the initiation of DNA replication, and progression of DNA replication forks. GINS complex is a core component of CDC45-MCM-GINS (CMG) helicase, the molecular machine that unwinds template DNA during replication, and around which the replisome is built. The polypeptide is Probable DNA replication complex GINS protein PSF2 (psf-2) (Caenorhabditis elegans).